We begin with the raw amino-acid sequence, 155 residues long: Ribosomal RNA large subunit methyltransferase H (155 aa).

S-adenosyl-L-methionine contacts are provided by residues glycine 104 and 123–128 (LSAMTF).

This sequence belongs to the RNA methyltransferase RlmH family. In terms of assembly, homodimer.

The protein localises to the cytoplasm. The enzyme catalyses pseudouridine(1915) in 23S rRNA + S-adenosyl-L-methionine = N(3)-methylpseudouridine(1915) in 23S rRNA + S-adenosyl-L-homocysteine + H(+). Specifically methylates the pseudouridine at position 1915 (m3Psi1915) in 23S rRNA. The protein is Ribosomal RNA large subunit methyltransferase H of Oleidesulfovibrio alaskensis (strain ATCC BAA-1058 / DSM 17464 / G20) (Desulfovibrio alaskensis).